The following is a 341-amino-acid chain: GDT1-like protein 1, chloroplastic (341 aa).

Positions 1–13 are enriched in low complexity; that stretch reads MASVASSTVFASS. 2 disordered regions span residues 1–41 and 54–76; these read MASV…GRSV and VVTRASDEEGPPEPAGQGRGGGR. Residues 1–57 constitute a chloroplast transit peptide; that stretch reads MASVASSTVFASSLPHHRATTRAPPTPPRIPRRARLPGRSVVSCLPKRGSEKLVVTR. 7 consecutive transmembrane segments (helical) span residues 79–99, 117–137, 158–178, 203–223, 246–266, 286–306, and 318–338; these read PSLDASSCGLALAAAAGVLML, VVGDLGDISTGFASAFLLIFF, AIIFLGTFGALAVMTIISVVL, FLAACLLVYYGITTLLDAASG, GAGIISAASTIASTFVLVFIA, LGVIAGSLAGHAVATLIAVLG, and IVAYIGGSLFLAFAAVTLVEI.

This sequence belongs to the GDT1 family.

The protein localises to the plastid. It localises to the chloroplast membrane. The polypeptide is GDT1-like protein 1, chloroplastic (Oryza sativa subsp. japonica (Rice)).